The chain runs to 508 residues: 2'-5'-oligoadenylate synthase-like protein 2 (508 aa).

Residue Ser-69 participates in ATP binding. Mg(2+) is bound by residues Asp-81, Asp-83, and Asp-154. ATP contacts are provided by Arg-213 and Lys-216. In terms of domain architecture, Ubiquitin-like spans 435–473 (ILVFVKYPGGQSKPFTIDPDDTILDLKEKIEDAGGPCAE).

This sequence belongs to the 2-5A synthase family. The cofactor is Mg(2+). Strongly expressed in spleen dendritic cells, whereas, in bone marrow-derived dendritic cells, the amount increases during the maturation process. Expressed in many organs, the highest levels being in thymus, lung, and bone marrow.

It catalyses the reaction 3 ATP = 5'-triphosphoadenylyl-(2'-&gt;5')-adenylyl-(2'-&gt;5')-adenosine + 2 diphosphate. With respect to regulation, produced as a latent enzyme which is activated by dsRNA generated during the course of viral infection. The dsRNA activator must be at least 15 nucleotides long, and no modification of the 2'-hydroxyl group is tolerated. ssRNA or dsDNA do not act as activators. Interferon-induced, dsRNA-activated antiviral enzyme which plays a critical role in cellular innate antiviral response. Synthesizes oligomers of 2'-5'-oligoadenylates (2-5A) from ATP which then bind to the inactive monomeric form of ribonuclease L (RNase L) leading to its dimerization and subsequent activation. Activation of RNase L leads to degradation of cellular as well as viral RNA, resulting in the inhibition of protein synthesis, thus terminating viral replication. Can mediate the antiviral effect via the classical RNase L-dependent pathway or an alternative antiviral pathway independent of RNase L. This Mus musculus (Mouse) protein is 2'-5'-oligoadenylate synthase-like protein 2 (Oasl2).